The chain runs to 414 residues: Secernin-1 (414 aa).

The protein belongs to the peptidase C69 family. Secernin subfamily.

It localises to the cytoplasm. Its function is as follows. Regulates exocytosis in mast cells. Increases both the extent of secretion and the sensitivity of mast cells to stimulation with calcium. In Rattus norvegicus (Rat), this protein is Secernin-1 (Scrn1).